Reading from the N-terminus, the 651-residue chain is Bromodomain-containing protein 7 (651 aa).

Residue Lys-21 forms a Glycyl lysine isopeptide (Lys-Gly) (interchain with G-Cter in SUMO2) linkage. Residues 35–45 (TELSTGSSGHD) show a composition bias toward polar residues. Positions 35-132 (TELSTGSSGH…SSLAKQEEVE (98 aa)) are disordered. Basic and acidic residues predominate over residues 47-57 (SLFEDKNDHDK). A Glycyl lysine isopeptide (Lys-Gly) (interchain with G-Cter in SUMO2) cross-link involves residue Lys-52. Basic residues predominate over residues 58–69 (HKDRKRKKRKKG). A Nuclear localization signal motif is present at residues 65 to 96 (KRKKGEKQIPGEEKGRKRRRVKEDKKKRDRDR). Basic and acidic residues predominate over residues 70 to 106 (EKQIPGEEKGRKRRRVKEDKKKRDRDRVENEAEKDLQ). Glycyl lysine isopeptide (Lys-Gly) (interchain with G-Cter in SUMO2) cross-links involve residues Lys-127, Lys-186, Lys-197, Lys-201, Lys-212, and Lys-241. The Bromo domain occupies 131–235 (VEQTPLQEAL…HSGMKILSQE (105 aa)). Residues 253-301 (TRKQKDGTDTSQSGEDGGCWQREREDSGDAEAHAFKSPSKENKKKDKDM) form a disordered region. Positions 273 to 301 (QREREDSGDAEAHAFKSPSKENKKKDKDM) are enriched in basic and acidic residues. Phosphoserine occurs at positions 279 and 289. Glycyl lysine isopeptide (Lys-Gly) (interchain with G-Cter in SUMO2) cross-links involve residues Lys-305 and Lys-307. N6-acetyllysine is present on Lys-328. Lys-344 is covalently cross-linked (Glycyl lysine isopeptide (Lys-Gly) (interchain with G-Cter in SUMO2)). Residue Ser-380 is modified to Phosphoserine. Lys-389 participates in a covalent cross-link: Glycyl lysine isopeptide (Lys-Gly) (interchain with G-Cter in SUMO2). Phosphoserine is present on Ser-482. Residue Thr-514 is modified to Phosphothreonine. Positions 536–567 (SEEAEIFQKKLDETTRLLRELQEAQNERLSTR) form a coiled coil. A Phosphoserine modification is found at Ser-621.

In terms of assembly, interacts with TRIM24, PTPN13 and DVL1. Identified in a complex with SMARCA4/BRG1, SMARCC1/BAF155, SMARCE1/BAF57, DPF2/BAF45D and ARID2, subunits of the SWI/SNF-B (PBAF) chromatin remodeling complex. Interacts with IRF2 and HNRPUL1. Interacts (via N-terminus) with TP53. Interacts (via C-terminus) with EP300. Interacts with BRCA1. Interacts (via bromo domain) with histone H3 (via N-terminus) acetylated at 'Lys-14' (H3K14ac). Has low affinity for histone H3 acetylated at 'Lys-9' (H3K9ac). Has the highest affinity for histone H3 that is acetylated both at 'Lys-9' (H3K9ac) and at 'Lys-14' (H3K14ac). Has very low affinity for non-acetylated histone H3. Interacts (via bromo domain) with histone H4 (via N-terminus) acetylated at 'Lys-8' (H3K8ac) (in vitro).

It localises to the nucleus. It is found in the chromosome. Its function is as follows. Acts both as coactivator and as corepressor. May play a role in chromatin remodeling. Activator of the Wnt signaling pathway in a DVL1-dependent manner by negatively regulating the GSK3B phosphotransferase activity. Induces dephosphorylation of GSK3B at 'Tyr-216'. Down-regulates TRIM24-mediated activation of transcriptional activation by AR. Transcriptional corepressor that down-regulates the expression of target genes. Binds to target promoters, leading to increased histone H3 acetylation at 'Lys-9' (H3K9ac). Binds to the ESR1 promoter. Recruits BRCA1 and POU2F1 to the ESR1 promoter. Coactivator for TP53-mediated activation of transcription of a set of target genes. Required for TP53-mediated cell-cycle arrest in response to oncogene activation. Promotes acetylation of TP53 at 'Lys-382', and thereby promotes efficient recruitment of TP53 to target promoters. Inhibits cell cycle progression from G1 to S phase. The protein is Bromodomain-containing protein 7 (BRD7) of Homo sapiens (Human).